Reading from the N-terminus, the 229-residue chain is Sperm flagellar protein 1 (229 aa).

Residues 7–115 enclose the Calponin-homology (CH) domain; the sequence is EETMQELYTW…TLRQKIEEKQ (109 aa). Residues 122–169 are disordered; the sequence is ADLSQDQATQNNGNTHSDKGYKSNGTELSPRQGARVDPASKTHQGYAQ. Residues 123–136 are compositionally biased toward polar residues; that stretch reads DLSQDQATQNNGNT. The essential for homodimerization and microtubule bundling activity stretch occupies residues 178–229; the sequence is RFQLAEKEQTLILSQETIQILQAKLRRLEQLLLLKNVRIDDLTRRLQELEKK.

As to quaternary structure, homodimer.

It is found in the cytoplasm. It localises to the cytoskeleton. Its subcellular location is the cilium axoneme. The protein localises to the apical cell membrane. Functionally, microtubule-associated protein involved in the stabilization of microtubules along the axis of migration during radial intercalation. Promotes the establishment and stabilization of an axis of microtubules required for the active migration of cells into the outer epithelium. Microtubule-associated protein that promotes microtubule bundling and stabilizes microtubules against depolymerization in response to cold shock. Essential for ciliary central apparatus formation which requires both its microtubule-binding and bundling activities. Regulates planar cell polarity signaling pathway and asymmetric microtubule accumulation in ciliated epithelia. This chain is Sperm flagellar protein 1, found in Xenopus laevis (African clawed frog).